The primary structure comprises 286 residues: Energy-coupling factor transporter ATP-binding protein EcfA2 (286 aa).

The ABC transporter domain maps to 3 to 245 (IKIENLTYTY…IDTLEKVGLA (243 aa)). An ATP-binding site is contributed by 40 to 47 (GHTGSGKS).

The protein belongs to the ABC transporter superfamily. Energy-coupling factor EcfA family. As to quaternary structure, forms a stable energy-coupling factor (ECF) transporter complex composed of 2 membrane-embedded substrate-binding proteins (S component), 2 ATP-binding proteins (A component) and 2 transmembrane proteins (T component).

It localises to the cell membrane. Its function is as follows. ATP-binding (A) component of a common energy-coupling factor (ECF) ABC-transporter complex. Unlike classic ABC transporters this ECF transporter provides the energy necessary to transport a number of different substrates. In Clostridium acetobutylicum (strain ATCC 824 / DSM 792 / JCM 1419 / IAM 19013 / LMG 5710 / NBRC 13948 / NRRL B-527 / VKM B-1787 / 2291 / W), this protein is Energy-coupling factor transporter ATP-binding protein EcfA2.